Consider the following 408-residue polypeptide: Multidrug resistance protein MdtG (408 aa).

Helical transmembrane passes span 16–36 (LIVA…VMPF), 58–78 (IVFS…GGLA), 92–112 (LGMG…QFLI), 115–135 (ALLG…ATQV), 146–166 (TLST…GLLA), 173–193 (PVFF…LFCI), 224–244 (LFVT…ILTL), 256–276 (VAFI…LSAP), 290–310 (ILIT…YVQT), 319–339 (FLLG…LVYN), and 378–398 (AVFL…WNSL).

This sequence belongs to the major facilitator superfamily. DHA1 family. MdtG (TC 2.A.1.2.20) subfamily.

Its subcellular location is the cell inner membrane. Functionally, confers resistance to fosfomycin and deoxycholate. This Escherichia coli O7:K1 (strain IAI39 / ExPEC) protein is Multidrug resistance protein MdtG.